The primary structure comprises 535 residues: Probable serine/threonine protein phosphatase 2A regulatory subunit B''delta (535 aa).

The segment at 67–104 is disordered; that stretch reads SGTNSGSNSPLASMFPARNGPPLSPRNSTGSPRIARQR. EF-hand domains lie at 174–209 and 387–422; these read VPSF…GNML and SSEP…QLHR. Residues D400, D402, N404, and E411 each coordinate Ca(2+).

PP2A consists of a common heterodimeric core enzyme, composed of a 36 kDa catalytic subunit (subunit C) and a 65 kDa constant regulatory subunit (PR65 or subunit A), that associates with a variety of regulatory subunits. Proteins that associate with the core dimer include three families of regulatory subunits B (the R2/B/PR55/B55, R3/B''/PR72/PR130/PR59 and R5/B'/B56 families) and cell signaling molecules.

Probable regulatory subunit of type 2A protein phosphatase. In Arabidopsis thaliana (Mouse-ear cress), this protein is Probable serine/threonine protein phosphatase 2A regulatory subunit B''delta (B''DELTA).